A 164-amino-acid polypeptide reads, in one-letter code: UPF0114 protein YqhA (164 aa).

The next 3 helical transmembrane spans lie at 15 to 35, 53 to 73, and 136 to 156; these read LLAPVYFGLSLALIALALKFF, LILVLLSLVDMTLVGGLLVMV, and LMWYVIIHLTFVLSAFVMGYL.

The protein belongs to the UPF0114 family.

The protein localises to the cell membrane. This is UPF0114 protein YqhA from Salmonella agona (strain SL483).